The following is a 146-amino-acid chain: Small ribosomal subunit protein uS9x (146 aa).

It belongs to the universal ribosomal protein uS9 family.

It localises to the cytoplasm. The protein is Small ribosomal subunit protein uS9x (RPS16C) of Arabidopsis thaliana (Mouse-ear cress).